The primary structure comprises 630 residues: MCSPTNFLYEPFSSDAVTQNYDQNLKCTKCGAYYSMACSLREQNVWTCLFCNQSNSNAELPLVPSNTYTLTSAKKEILSRRTIMIIDAICDPHELNYLVSILCNNYITRQQEPLSIITIQQSGHVILHNAVNHRRDAVFSINEFMTKYNLDKLNASYFEKKISEINQESYWFDKSTQGSLRKLLREICKIANKVNISSKRDKRCTGLALFVSSVLASQCSLSAYCHIVSFLNGPCTKGGGKVMSRERGESMRQNHHFESKSSQLQLSKSPTKFYKKMLEKFANQSLIYEFFIASLDQIGILEMSPLITSSMAVSQFDSFNDERFAMSFQKYLNLRDHNAIYNCHSKIMTAKNAIVVKDFPKYSLNPKNLSLPLEISLGHNSAEAPIQFQTTFENQTEKYIRIETLLLPKANRSFGAQNEIVFSMKKIASRIIDSFAYSSKHTKELMKQLFLLPNQIRGKDVDMVNLIQWCYHIYRSPILSVRNTSPDERYLFLHRIINASKDTCLSLCKPFIWSYSDLKHDWIVLDVPLTRAQILQDDKTTICVDGGSYLVLRRGKLLEKEGRELCCKLLNDLQRFPQPLYVETKTGGSQDRFLKSKIIPLDITDKETLGTEDMTFNEYFNLFTDLSGSK.

It belongs to the SEC23/SEC24 family. SEC23 subfamily.

The protein localises to the cytoplasm. The protein resides in the nucleus. Functionally, acts as a GTPase-activating protein (GAP) for SAR1. Contrary to its SEC23 homolog, NEL1 does not associate with SEC24 and its homologs, nor does it associate with the COPII components, suggesting that it is unlikely that NEL1 functions as a structural component of the vesicle coat machinery. May function as a signaling molecule. The polypeptide is GTPase-activating protein NEL1 (Saccharomyces cerevisiae (strain ATCC 204508 / S288c) (Baker's yeast)).